The chain runs to 236 residues: Thymidylate kinase (236 aa).

Residue 9-16 (GPEGSGKS) coordinates ATP.

Belongs to the thymidylate kinase family.

The enzyme catalyses dTMP + ATP = dTDP + ADP. Functionally, phosphorylation of dTMP to form dTDP in both de novo and salvage pathways of dTTP synthesis. In Herpetosiphon aurantiacus (strain ATCC 23779 / DSM 785 / 114-95), this protein is Thymidylate kinase.